A 112-amino-acid chain; its full sequence is Urocortin-2 (112 aa).

The signal sequence occupies residues 1-22 (MTRCALLLLMVLMLGRVLVVPV). Positions 23-70 (TPIPTFQLRPQNSPQTTPRPAASESPSAAPTWPWAAQSHCSPTRHPGS) are excised as a propeptide. A disordered region spans residues 27 to 66 (TFQLRPQNSPQTTPRPAASESPSAAPTWPWAAQSHCSPTR). Residues 38–58 (TTPRPAASESPSAAPTWPWAA) show a composition bias toward low complexity.

This sequence belongs to the sauvagine/corticotropin-releasing factor/urotensin I family. As to quaternary structure, binds with high affinity to CRF receptors 2-alpha and 2-beta. Glycosylated.

It localises to the secreted. Its function is as follows. Suppresses food intake, delays gastric emptying and decreases heat-induced edema. Might represent an endogenous ligand for maintaining homeostasis after stress. This Homo sapiens (Human) protein is Urocortin-2 (UCN2).